The following is a 345-amino-acid chain: Cysteinyl leukotriene receptor 2 (345 aa).

The Extracellular portion of the chain corresponds to 1-43; the sequence is MERKLMSLLPSISLSEMEPNSTLGNHNSNRSCTTENFKREFYP. Asn-20 and Asn-29 each carry an N-linked (GlcNAc...) asparagine glycan. Residues 44 to 64 traverse the membrane as a helical segment; that stretch reads IVYLVIFIWGALGNGFSIYVF. Topologically, residues 65–73 are cytoplasmic; that stretch reads LKPYKKSTS. Residues 74–94 traverse the membrane as a helical segment; sequence VNVFMLNLAISDLLFTITLPF. Over 95–124 the chain is Extracellular; it reads RVDYYLRGSNXIFGDTPCRIMSYSMYVNMY. A disulfide bridge links Cys-112 with Cys-188. Residues 125–145 form a helical membrane-spanning segment; it reads SSIYFLTVLSVVRFLATVHPF. The Cytoplasmic segment spans residues 146–154; sequence RLLHTTSIK. Residues 155–175 traverse the membrane as a helical segment; sequence NAWILCGVIWIFIMASSTVLL. Residues 176 to 205 are Extracellular-facing; it reads KNGSEQKDNVTLCLELNSNKVTKLKTMNYV. 2 N-linked (GlcNAc...) asparagine glycosylation sites follow: Asn-177 and Asn-184. A helical transmembrane segment spans residues 206–226; sequence ALVVGFVLPFGTLSICYLLII. Over 227–246 the chain is Cytoplasmic; it reads RALLKVEVPESGLRLSHRKA. Residues 247–267 form a helical membrane-spanning segment; sequence LITVIIALIIFLLCFLPYHVL. The Extracellular segment spans residues 268 to 287; it reads RTLHLLEWKADKCKDRLHKA. A helical membrane pass occupies residues 288–308; that stretch reads VAVTLALAAANSCFNPFLYYF. The Cytoplasmic segment spans residues 309–345; that stretch reads AGENFKDRLKSALRKGRPQKTRCGFSVCVWLKKETRV.

Belongs to the G-protein coupled receptor 1 family.

Its subcellular location is the cell membrane. In terms of biological role, receptor for cysteinyl leukotrienes. The response is mediated via a G-protein that activates a phosphatidylinositol-calcium second messenger system. The sequence is that of Cysteinyl leukotriene receptor 2 (CYSLTR2) from Sus scrofa (Pig).